A 395-amino-acid chain; its full sequence is Cytoplasmic 60S subunit biogenesis factor REI1 homolog 2 (395 aa).

4 C2H2-type zinc fingers span residues 4 to 28 (LACN…SEWH), 68 to 92 (YSCG…SKSH), 171 to 194 (ACCL…HKFH), and 222 to 249 (FVCL…AKGH).

It belongs to the REI1 family. Can form homodimer. Interacts with RLP24, RLP24A, RPL24B, EBP1 and JJJ1.

It is found in the cytoplasm. Pre-60S-associated factor involved in the cytoplasmic maturation of the 60S subunit. Involved in the dissociation and recycling of other late pre-60S factors before newly synthesized large ribosomal subunits enter translation. Can complement the growth defect of a yeast mutant lacking REI1. Required for leaf growth under cold temperature conditions. The polypeptide is Cytoplasmic 60S subunit biogenesis factor REI1 homolog 2 (Arabidopsis thaliana (Mouse-ear cress)).